The sequence spans 353 residues: Fe(3+) ions import ATP-binding protein FbpC (353 aa).

The region spanning 9–239 is the ABC transporter domain; it reads VTFENVTKKF…PASAFIADFM (231 aa). 41–48 provides a ligand contact to ATP; it reads GLSGCGKT.

It belongs to the ABC transporter superfamily. Fe(3+) ion importer (TC 3.A.1.10) family. As to quaternary structure, the complex is composed of two ATP-binding proteins (FbpC), two transmembrane proteins (FbpB) and a solute-binding protein (FbpA).

The protein localises to the cell inner membrane. It catalyses the reaction Fe(3+)(out) + ATP + H2O = Fe(3+)(in) + ADP + phosphate + H(+). Functionally, part of the ABC transporter complex FbpABC involved in Fe(3+) ions import. Responsible for energy coupling to the transport system. This Brucella melitensis biotype 1 (strain ATCC 23456 / CCUG 17765 / NCTC 10094 / 16M) protein is Fe(3+) ions import ATP-binding protein FbpC.